A 102-amino-acid chain; its full sequence is Small ribosomal subunit protein eS24 (102 aa).

Belongs to the eukaryotic ribosomal protein eS24 family.

This is Small ribosomal subunit protein eS24 from Methanococcus maripaludis (strain C7 / ATCC BAA-1331).